We begin with the raw amino-acid sequence, 785 residues long: Conidiophore development regulator abaA (785 aa).

The interval 1–22 (MAEWQTECMLPPTQPGFEGVGP) is disordered. The TEA DNA-binding region spans 130-204 (GKDGEPVWSD…QVLDSFLKGD (75 aa)). Residues 213–232 (EQPADRSNGQPPSAGPRWRN) form a disordered region.

Belongs to the TEC1 family.

The protein resides in the nucleus. BrlA, abaA and wetA are pivotal regulators of conidiophore development and conidium maturation. They act individually and together to regulate their own expression and that of numerous other sporulation-specific genes. Binds to the sequence 5'-CATTCY-3', where Y is a pyrimidine, making both major- and minor-groove contacts. Controls expression of wetA. In Aspergillus oryzae (strain ATCC 42149 / RIB 40) (Yellow koji mold), this protein is Conidiophore development regulator abaA.